The primary structure comprises 230 residues: Fibrillarin-like rRNA/tRNA 2'-O-methyltransferase (230 aa).

S-adenosyl-L-methionine-binding positions include 87–88 (TT), 105–106 (EF), 130–131 (DA), and 150–153 (DVAQ).

It belongs to the methyltransferase superfamily. Fibrillarin family. Interacts with nop5. Component of box C/D small ribonucleoprotein (sRNP) particles that contain rpl7ae, FlpA and nop5, plus a guide RNA.

Its function is as follows. Involved in pre-rRNA and tRNA processing. Utilizes the methyl donor S-adenosyl-L-methionine to catalyze the site-specific 2'-hydroxyl methylation of ribose moieties in rRNA and tRNA. Site specificity is provided by a guide RNA that base pairs with the substrate. Methylation occurs at a characteristic distance from the sequence involved in base pairing with the guide RNA. This chain is Fibrillarin-like rRNA/tRNA 2'-O-methyltransferase, found in Methanococcus maripaludis (strain C6 / ATCC BAA-1332).